The primary structure comprises 575 residues: Muellerian-inhibiting factor (575 aa).

A signal peptide spans 1–24 (MPGPSLSLALVLSAMGALLRPGTP). A propeptide spanning residues 25–466 (REEVFSTSAL…ERSGSARAQR (442 aa)) is cleaved from the precursor. Residues N78 and N344 are each glycosylated (N-linked (GlcNAc...) asparagine). 3 disulfide bridges follow: C477-C541, C503-C572, and C507-C574.

Belongs to the TGF-beta family. In terms of assembly, homodimer; disulfide-linked. Preproprotein is proteolytically processed to generate N- and C-terminal cleavage products that homodimerize and associate to form a biologically active non-covalent complex. Binding of the non-covalent complex to AMHR2 induces dissociation of the pro-region from the mature C-terminal dimer. The N-terminal portion of the protein, despite having no intrinsic activity, has the role of amplifying the activity of the C-terminus. As to expression, expressed in fetal testis and adult ovaries.

The protein resides in the secreted. Plays an important role in several reproductive functions. Induces Muellerian duct regression during male fetal sexual differentiation and plays a role in Leydig cell differentiation and function. In female acts as a negative regulator of the primordial to primary follicle transition and decreases FSH sensitivity of growing follicles. AMH signals by binding to a specific type-II receptor, AMHR2, that heterodimerizes with type-I receptors (ACVR1 and BMPR1A), and recruiting SMAD proteins that are translocated to the nucleus to regulate target gene expression. The polypeptide is Muellerian-inhibiting factor (AMH) (Bos taurus (Bovine)).